The chain runs to 436 residues: 3-ketoacyl-CoA thiolase (436 aa).

Cysteine 99 serves as the catalytic Acyl-thioester intermediate. Residues histidine 392 and cysteine 422 each act as proton acceptor in the active site.

This sequence belongs to the thiolase-like superfamily. Thiolase family. Heterotetramer of two alpha chains (FadJ) and two beta chains (FadI).

The protein localises to the cytoplasm. It carries out the reaction an acyl-CoA + acetyl-CoA = a 3-oxoacyl-CoA + CoA. The protein operates within lipid metabolism; fatty acid beta-oxidation. In terms of biological role, catalyzes the final step of fatty acid oxidation in which acetyl-CoA is released and the CoA ester of a fatty acid two carbons shorter is formed. The protein is 3-ketoacyl-CoA thiolase of Salmonella paratyphi C (strain RKS4594).